We begin with the raw amino-acid sequence, 189 residues long: MAERGSDIRPGYVLEHNNALYLVVKIMHTQPGKGGAYIQAEMKNLKTGAKQYERFRADGDIKRAILDEADYQYIYGDDSMLTVMHLGNYEQITIKKDILGDKSIYLKDNMVITLLSYNGEIISAKVPDYVTLQVIETEAVIKGQTVSSSSYKVAMLENNQRINVPTFIKSGDKIVVYTPDDSYYERAKE.

This sequence belongs to the elongation factor P family.

The protein resides in the cytoplasm. It functions in the pathway protein biosynthesis; polypeptide chain elongation. Its function is as follows. Involved in peptide bond synthesis. Stimulates efficient translation and peptide-bond synthesis on native or reconstituted 70S ribosomes in vitro. Probably functions indirectly by altering the affinity of the ribosome for aminoacyl-tRNA, thus increasing their reactivity as acceptors for peptidyl transferase. In Ehrlichia ruminantium (strain Gardel), this protein is Elongation factor P.